A 241-amino-acid chain; its full sequence is Orotidine 5'-phosphate decarboxylase (241 aa).

Residues Asp-15, Lys-37, 64-73 (DLKYHDIPNT), Thr-126, Arg-187, Gln-196, Gly-216, and Arg-217 each bind substrate. Catalysis depends on Lys-66, which acts as the Proton donor.

The protein belongs to the OMP decarboxylase family. Type 1 subfamily. Homodimer.

It catalyses the reaction orotidine 5'-phosphate + H(+) = UMP + CO2. Its pathway is pyrimidine metabolism; UMP biosynthesis via de novo pathway; UMP from orotate: step 2/2. Catalyzes the decarboxylation of orotidine 5'-monophosphate (OMP) to uridine 5'-monophosphate (UMP). In Trichlorobacter lovleyi (strain ATCC BAA-1151 / DSM 17278 / SZ) (Geobacter lovleyi), this protein is Orotidine 5'-phosphate decarboxylase.